Here is a 231-residue protein sequence, read N- to C-terminus: Small ribosomal subunit protein uS5 (231 aa).

The disordered stretch occupies residues 1-63; that stretch reads MADLENKTVK…KSVDRANKVK (63 aa). The span at 29–60 shows a compositional bias: basic and acidic residues; the sequence is KRTESGAKKQIWEKRSAHDSKDMPKKSVDRAN. Residues 75–138 form the S5 DRBM domain; it reads FSEKVVNISR…KDARNHLISV (64 aa).

The protein belongs to the universal ribosomal protein uS5 family. In terms of assembly, part of the 30S ribosomal subunit. Contacts proteins S4 and S8.

With S4 and S12 plays an important role in translational accuracy. In terms of biological role, located at the back of the 30S subunit body where it stabilizes the conformation of the head with respect to the body. This is Small ribosomal subunit protein uS5 from Mycoplasmopsis agalactiae (strain NCTC 10123 / CIP 59.7 / PG2) (Mycoplasma agalactiae).